The sequence spans 325 residues: Pyruvate dehydrogenase E1 component subunit beta (325 aa).

Glutamate 60 is a thiamine diphosphate binding site.

In terms of assembly, heterodimer of an alpha and a beta chain. Thiamine diphosphate is required as a cofactor.

The enzyme catalyses N(6)-[(R)-lipoyl]-L-lysyl-[protein] + pyruvate + H(+) = N(6)-[(R)-S(8)-acetyldihydrolipoyl]-L-lysyl-[protein] + CO2. In terms of biological role, the pyruvate dehydrogenase complex catalyzes the overall conversion of pyruvate to acetyl-CoA and CO(2). It contains multiple copies of three enzymatic components: pyruvate dehydrogenase (E1), dihydrolipoamide acetyltransferase (E2) and lipoamide dehydrogenase (E3). This chain is Pyruvate dehydrogenase E1 component subunit beta (pdhB), found in Staphylococcus aureus (strain COL).